The chain runs to 536 residues: Subtilisin-like proteinase Spm1 (536 aa).

A signal peptide spans 1–15 (MKSVILLSLAACAVA). Residues 16–147 (APTAGVETIH…RYEEVKKDEC (132 aa)) constitute a propeptide that is removed on maturation. An Inhibitor I9 domain is found at 44-137 (YIIKFKKHVD…IERDTIVHTM (94 aa)). The Peptidase S8 domain occupies 156-462 (PWGLSRVSHR…GGCSNYFEIV (307 aa)). Catalysis depends on charge relay system residues aspartate 192 and histidine 224. 2 N-linked (GlcNAc...) asparagine glycosylation sites follow: asparagine 254 and asparagine 294. Serine 390 acts as the Charge relay system in catalysis.

This sequence belongs to the peptidase S8 family.

Its subcellular location is the vacuole. The sequence is that of Subtilisin-like proteinase Spm1 (SPM1) from Pyricularia oryzae (strain 70-15 / ATCC MYA-4617 / FGSC 8958) (Rice blast fungus).